The sequence spans 380 residues: DNA replication and repair protein RecF (380 aa).

Residue 30–37 (GNNAQGKS) coordinates ATP.

Belongs to the RecF family.

The protein resides in the cytoplasm. The RecF protein is involved in DNA metabolism; it is required for DNA replication and normal SOS inducibility. RecF binds preferentially to single-stranded, linear DNA. It also seems to bind ATP. This chain is DNA replication and repair protein RecF, found in Rippkaea orientalis (strain PCC 8801 / RF-1) (Cyanothece sp. (strain PCC 8801)).